Reading from the N-terminus, the 219-residue chain is Ribonuclease HII (219 aa).

One can recognise an RNase H type-2 domain in the interval 10-219 (HLEAGTDEAG…LLPEQTVLDL (210 aa)). The a divalent metal cation site is built by Asp-16, Glu-17, and Asp-108.

The protein belongs to the RNase HII family. It depends on Mn(2+) as a cofactor. Mg(2+) serves as cofactor.

Its subcellular location is the cytoplasm. The enzyme catalyses Endonucleolytic cleavage to 5'-phosphomonoester.. Its function is as follows. Endonuclease that specifically degrades the RNA of RNA-DNA hybrids. In Flavobacterium psychrophilum (strain ATCC 49511 / DSM 21280 / CIP 103535 / JIP02/86), this protein is Ribonuclease HII.